Here is a 388-residue protein sequence, read N- to C-terminus: P2X receptor E (388 aa).

Residues 1-28 (MNFRNIDWDSLFSYSTIKIVRIRDKRLG) lie on the Cytoplasmic side of the membrane. A helical transmembrane segment spans residues 29–49 (ILHFAFLIGIILYIIVGTIFL). The Lumenal segment spans residues 50–312 (QKKYLVLESP…QLGQFDFQTM (263 aa)). A pore-forming motif region spans residues 291–304 (RHGVRIIFIQTGQL). A helical membrane pass occupies residues 313 to 333 (LLTFVSGIGLVTAASLIVDII). At 334–388 (ATRIMPQRSRYQELKFQDSSINNTQKTPTNDHTPLLKDNEDTINENSYQNNSYEK) the chain is on the cytoplasmic side. The disordered stretch occupies residues 349–388 (FQDSSINNTQKTPTNDHTPLLKDNEDTINENSYQNNSYEK). Polar residues-rich tracts occupy residues 350–365 (QDSS…TNDH) and 377–388 (NENSYQNNSYEK).

This sequence belongs to the P2X receptor family.

Its subcellular location is the contractile vacuole membrane. Functionally, P2X receptors are ATP-gated ion channels that play a role in intracellular calcium signaling. Not required for the purinergic response to extracellular nucleotides. Not essential for osmoregulation. Inward currents evoked by intracellular ATP. ATP analog beta, gamma-imido-ATP is a weak partial agonist of p2xE. Exclusively selective for ATP over other nucleotides. Insensitive to copper and P2 receptor antagonists PPADS and suramin but strongly inhibited by sodium ions. More permeable to ammonium than either sodium or potassium ions and less permeable to choline. Permeable to calcium ions, but not chloride. This Dictyostelium discoideum (Social amoeba) protein is P2X receptor E (p2xE).